The chain runs to 327 residues: Glycerol-3-phosphate dehydrogenase [NAD(P)+] (327 aa).

NADPH is bound by residues serine 10, phenylalanine 11, arginine 31, and lysine 108. Sn-glycerol 3-phosphate is bound by residues lysine 108, glycine 136, and serine 138. Alanine 140 contributes to the NADPH binding site. Residues lysine 191, aspartate 246, serine 256, arginine 257, and asparagine 258 each contribute to the sn-glycerol 3-phosphate site. The active-site Proton acceptor is the lysine 191. Arginine 257 is an NADPH binding site. 2 residues coordinate NADPH: leucine 281 and glutamate 283.

This sequence belongs to the NAD-dependent glycerol-3-phosphate dehydrogenase family.

The protein resides in the cytoplasm. The catalysed reaction is sn-glycerol 3-phosphate + NAD(+) = dihydroxyacetone phosphate + NADH + H(+). It carries out the reaction sn-glycerol 3-phosphate + NADP(+) = dihydroxyacetone phosphate + NADPH + H(+). It participates in membrane lipid metabolism; glycerophospholipid metabolism. Its function is as follows. Catalyzes the reduction of the glycolytic intermediate dihydroxyacetone phosphate (DHAP) to sn-glycerol 3-phosphate (G3P), the key precursor for phospholipid synthesis. The polypeptide is Glycerol-3-phosphate dehydrogenase [NAD(P)+] (Ehrlichia ruminantium (strain Gardel)).